Reading from the N-terminus, the 380-residue chain is Alanine racemase (380 aa).

The Proton acceptor; specific for D-alanine role is filled by lysine 34. N6-(pyridoxal phosphate)lysine is present on lysine 34. Arginine 135 contributes to the substrate binding site. The active-site Proton acceptor; specific for L-alanine is the tyrosine 267. Methionine 315 provides a ligand contact to substrate.

It belongs to the alanine racemase family. Pyridoxal 5'-phosphate is required as a cofactor.

The catalysed reaction is L-alanine = D-alanine. It functions in the pathway amino-acid biosynthesis; D-alanine biosynthesis; D-alanine from L-alanine: step 1/1. Functionally, catalyzes the interconversion of L-alanine and D-alanine. May also act on other amino acids. In Lawsonia intracellularis (strain PHE/MN1-00), this protein is Alanine racemase (alr).